The chain runs to 459 residues: Glycosyl hydrolase family 109 protein (459 aa).

The segment at residues 1 to 31 (MHNIHRRNFLKAAGAATAGLVTANIALSAYA) is a signal peptide (tat-type signal). Residues 64-65 (ER), aspartate 86, 135-138 (WEWH), 155-156 (EV), and asparagine 184 each bind NAD(+). Substrate-binding positions include tyrosine 213, arginine 232, 244–247 (YPTH), and tyrosine 326. Tyrosine 244 lines the NAD(+) pocket.

It belongs to the Gfo/Idh/MocA family. Glycosyl hydrolase 109 subfamily. Requires NAD(+) as cofactor. In terms of processing, predicted to be exported by the Tat system. The position of the signal peptide cleavage has not been experimentally proven.

Functionally, glycosidase. The sequence is that of Glycosyl hydrolase family 109 protein from Shewanella baltica (strain OS185).